Consider the following 343-residue polypeptide: NAD-dependent deacetylase sir2E (343 aa).

Residues 27 to 300 (YLKNKKEFEF…PLLERQLLYE (274 aa)) enclose the Deacetylase sirtuin-type domain. Histidine 152 acts as the Proton acceptor in catalysis. The Zn(2+) site is built by cysteine 160, cysteine 165, cysteine 200, and cysteine 203.

It belongs to the sirtuin family.

It is found in the nucleus. The enzyme catalyses N(6)-acetyl-L-lysyl-[protein] + NAD(+) + H2O = 2''-O-acetyl-ADP-D-ribose + nicotinamide + L-lysyl-[protein]. Its function is as follows. NAD-dependent deacetylase, which plays an important role in the regulation of transcriptional repression. May play a role in cell cycle. When overexpressed, the cell cycle is accelerated. This is NAD-dependent deacetylase sir2E (sir2E) from Dictyostelium discoideum (Social amoeba).